The primary structure comprises 392 residues: F-box protein At5g65850 (392 aa).

The 50-residue stretch at 29–78 (TEKSVQIPVDIIIEILLRLPAKSIATCRCVSKLWISVICRQDFTELFLTR) folds into the F-box domain.

The sequence is that of F-box protein At5g65850 from Arabidopsis thaliana (Mouse-ear cress).